A 179-amino-acid chain; its full sequence is Acireductone dioxygenase (179 aa).

Fe(2+) contacts are provided by His-88, His-90, Glu-94, and His-133. Ni(2+) contacts are provided by His-88, His-90, Glu-94, and His-133.

This sequence belongs to the acireductone dioxygenase (ARD) family. In terms of assembly, monomer. Interacts with MMP14. It depends on Fe(2+) as a cofactor. Requires Ni(2+) as cofactor.

It is found in the cytoplasm. It localises to the nucleus. The protein localises to the cell membrane. It carries out the reaction 1,2-dihydroxy-5-(methylsulfanyl)pent-1-en-3-one + O2 = 4-methylsulfanyl-2-oxobutanoate + formate + 2 H(+). The enzyme catalyses 1,2-dihydroxy-5-(methylsulfanyl)pent-1-en-3-one + O2 = 3-(methylsulfanyl)propanoate + CO + formate + 2 H(+). It participates in amino-acid biosynthesis; L-methionine biosynthesis via salvage pathway; L-methionine from S-methyl-5-thio-alpha-D-ribose 1-phosphate: step 5/6. Its function is as follows. Catalyzes 2 different reactions between oxygen and the acireductone 1,2-dihydroxy-3-keto-5-methylthiopentene (DHK-MTPene) depending upon the metal bound in the active site. Fe-containing acireductone dioxygenase (Fe-ARD) produces formate and 2-keto-4-methylthiobutyrate (KMTB), the alpha-ketoacid precursor of methionine in the methionine recycle pathway. Ni-containing acireductone dioxygenase (Ni-ARD) produces methylthiopropionate, carbon monoxide and formate, and does not lie on the methionine recycle pathway. Also down-regulates cell migration mediated by MMP14. The sequence is that of Acireductone dioxygenase from Macaca mulatta (Rhesus macaque).